A 292-amino-acid polypeptide reads, in one-letter code: MTDMPSVTTPALDRYAVFGNPIGHSKSPFIHGQFASLTQQTLSYEAILAPIDGFEASLRAFFQAGGKGANVTVPFKEQAFALCDSLSAEATLAGAVNTLSLLADGTIYGDNTDGLGLVADLVRHLGSLQHKRVLLVGAGGAARGCILPLLKAEVGQLVITNRTQSKAQALVDIFSQVQEGRYSDKLQAVSMSELSGVFDLVINSTSASLAGELPPLSQSIIGNKTACYDMMYGAKPTAFNQWALQQGAAQVIDGLGMLVGQAAKSFALWRGVEPDTSGVLKLLRDKLQVDAQ.

Shikimate contacts are provided by residues 25–27 (SKS) and Thr72. Lys76 functions as the Proton acceptor in the catalytic mechanism. 2 residues coordinate shikimate: Asn97 and Asp113. NADP(+) is bound by residues 137-141 (GAGGA), 161-166 (NRTQSK), and Met230. Tyr232 lines the shikimate pocket. Gly254 provides a ligand contact to NADP(+).

The protein belongs to the shikimate dehydrogenase family. Homodimer.

The catalysed reaction is shikimate + NADP(+) = 3-dehydroshikimate + NADPH + H(+). It participates in metabolic intermediate biosynthesis; chorismate biosynthesis; chorismate from D-erythrose 4-phosphate and phosphoenolpyruvate: step 4/7. Its function is as follows. Involved in the biosynthesis of the chorismate, which leads to the biosynthesis of aromatic amino acids. Catalyzes the reversible NADPH linked reduction of 3-dehydroshikimate (DHSA) to yield shikimate (SA). The sequence is that of Shikimate dehydrogenase (NADP(+)) from Shewanella sp. (strain ANA-3).